Reading from the N-terminus, the 288-residue chain is Probable HTH-type transcriptional regulator STM3175 (288 aa).

Positions 14 to 113 constitute an HTH araC/xylS-type domain; sequence RRVCDHIERH…GQSPRRFRQS (100 aa). DNA-binding regions (H-T-H motif) lie at residues 31-52 and 80-103; these read EALS…TTWS and VIDI…KTAF. The interval 111–288 is putative effector binding domain; binds the peptide antibiotic albicidin; sequence RQSPDWLAWH…LLTDIYLPLR (178 aa).

In terms of assembly, homodimer.

In terms of biological role, probable transcription factor. The protein is Probable HTH-type transcriptional regulator STM3175 of Salmonella typhimurium (strain LT2 / SGSC1412 / ATCC 700720).